Consider the following 110-residue polypeptide: Putative protein RIG (110 aa).

In terms of tissue distribution, expressed predominantly in brain and weakly in heart and lung. Expression is reduced or undetectable in cultured glioma cells, primary glioblastoma cells and malignant glioblastoma tumors.

May serve as a molecular marker for or play a role in the malignant progression of glioblastomas. In Homo sapiens (Human), this protein is Putative protein RIG (RIG).